We begin with the raw amino-acid sequence, 134 residues long: Large-conductance mechanosensitive channel (134 aa).

2 helical membrane passes run 10 to 30 (FAMR…GAFG) and 76 to 96 (GAFL…FVVI).

Belongs to the MscL family. In terms of assembly, homopentamer.

It localises to the cell inner membrane. Its function is as follows. Channel that opens in response to stretch forces in the membrane lipid bilayer. May participate in the regulation of osmotic pressure changes within the cell. The chain is Large-conductance mechanosensitive channel from Prosthecochloris aestuarii (strain DSM 271 / SK 413).